The primary structure comprises 503 residues: ATP synthase subunit alpha (503 aa).

An ATP-binding site is contributed by 169–176; sequence GDRGTGKT.

It belongs to the ATPase alpha/beta chains family. As to quaternary structure, F-type ATPases have 2 components, CF(1) - the catalytic core - and CF(0) - the membrane proton channel. CF(1) has five subunits: alpha(3), beta(3), gamma(1), delta(1), epsilon(1). CF(0) has three main subunits: a(1), b(2) and c(9-12). The alpha and beta chains form an alternating ring which encloses part of the gamma chain. CF(1) is attached to CF(0) by a central stalk formed by the gamma and epsilon chains, while a peripheral stalk is formed by the delta and b chains.

It localises to the cell inner membrane. It catalyses the reaction ATP + H2O + 4 H(+)(in) = ADP + phosphate + 5 H(+)(out). Functionally, produces ATP from ADP in the presence of a proton gradient across the membrane. The alpha chain is a regulatory subunit. This chain is ATP synthase subunit alpha, found in Leptospira interrogans serogroup Icterohaemorrhagiae serovar copenhageni (strain Fiocruz L1-130).